Here is a 162-residue protein sequence, read N- to C-terminus: Nascent polypeptide-associated complex subunit beta (162 aa).

Disordered regions lie at residues 1 to 39 (MPVD…NISE) and 130 to 162 (EQAK…DNVE). A compositionally biased stretch (basic residues) spans 24–33 (TPRRPGKKVA). The 66-residue stretch at 38–103 (SEDEKKLSAT…SQQKDIAELI (66 aa)) folds into the NAC-A/B domain. A compositionally biased stretch (acidic residues) spans 146–162 (GDDEIPNLVENFEDNVE).

This sequence belongs to the NAC-beta family. Part of the nascent polypeptide-associated complex (NAC), consisting of EGD2 and EGD1. NAC associates with ribosomes via EGD1.

The protein localises to the cytoplasm. The protein resides in the nucleus. Its function is as follows. Component of the nascent polypeptide-associated complex (NAC), a dynamic component of the ribosomal exit tunnel, protecting the emerging polypeptides from interaction with other cytoplasmic proteins to ensure appropriate nascent protein targeting. The NAC complex also promotes mitochondrial protein import by enhancing productive ribosome interactions with the outer mitochondrial membrane and blocks the inappropriate interaction of ribosomes translating non-secretory nascent polypeptides with translocation sites in the membrane of the endoplasmic reticulum. EGD1 may act as a transcription factor that exert a negative effect on the expression of several genes that are transcribed by RNA polymerase II. In Yarrowia lipolytica (strain CLIB 122 / E 150) (Yeast), this protein is Nascent polypeptide-associated complex subunit beta (EGD1).